The primary structure comprises 382 residues: POU domain, class 3, transcription factor 2-A (382 aa).

Disordered regions lie at residues 69–136 (PWAT…SSNG), 150–206 (GMIN…TPTS), and 348–382 (EKRM…TSVQ). The span at 122–136 (STGSTHLSSMASSNG) shows a compositional bias: polar residues. Residues 165-178 (LRDSHDDHHGDHGH) show a composition bias toward basic and acidic residues. Residues 179-194 (QQVSQAQQQHSQLQGG) show a composition bias toward low complexity. The 75-residue stretch at 201-275 (EDTPTSDDLE…LLNKWLEEAD (75 aa)) folds into the POU-specific domain. Positions 293-352 (KRKKRTSIEVSVKGALESHFLKCPKPSAPEITSLADSLQLEKEVVRVWFCNRRQKEKRMT) form a DNA-binding region, homeobox.

The protein belongs to the POU transcription factor family. Class-3 subfamily. Expressed in the developing brain and spinal cord. Also found in a restricted region of the auditory vesicle during development. In the adult, expression is restricted to the brain.

It localises to the nucleus. Its function is as follows. Transcription factor that may be implicated in patterning of the central nervous system during early development. The polypeptide is POU domain, class 3, transcription factor 2-A (pou3f2-a) (Xenopus laevis (African clawed frog)).